The primary structure comprises 365 residues: D-alanine--D-alanine ligase (365 aa).

Positions 135-345 constitute an ATP-grasp domain; sequence KLLLKSFNIP…YGSLVDKLIA (211 aa). Residue 168-223 coordinates ATP; the sequence is KQSLDYPVIVKPAMLGSSIGISIAYNETQIEKCIEEAFAYDLTVVIEKFMRAREIE. Residues Asp298, Glu312, and Asn314 each contribute to the Mg(2+) site.

This sequence belongs to the D-alanine--D-alanine ligase family. The cofactor is Mg(2+). It depends on Mn(2+) as a cofactor.

The protein resides in the cytoplasm. The enzyme catalyses 2 D-alanine + ATP = D-alanyl-D-alanine + ADP + phosphate + H(+). It functions in the pathway cell wall biogenesis; peptidoglycan biosynthesis. In terms of biological role, cell wall formation. This is D-alanine--D-alanine ligase from Borrelia turicatae (strain 91E135).